Here is a 292-residue protein sequence, read N- to C-terminus: Mitochondrial ornithine transporter 1 (292 aa).

Solcar repeat units lie at residues 11-97 (EGAI…CSKF), 105-196 (SPLG…VKKS), and 211-292 (SKIW…LSAL). 6 consecutive transmembrane segments (helical) span residues 14-34 (ILDI…EFPF), 69-89 (FFQG…TLFV), 104-124 (VSPL…ASLV), 171-187 (GQSG…VAWF), 213-233 (IWEL…SIFP), and 267-287 (GLGI…YIFE).

Belongs to the mitochondrial carrier (TC 2.A.29) family.

The protein resides in the mitochondrion inner membrane. Required for arginine biosynthesis. Transports ornithine synthesized from glutamate in the mitochondrial matrix to the cytosol, where it is converted to arginine. This Saccharomyces cerevisiae (strain ATCC 204508 / S288c) (Baker's yeast) protein is Mitochondrial ornithine transporter 1 (ORT1).